The chain runs to 260 residues: Na(+)-translocating NADH-quinone reductase subunit C (260 aa).

A helical transmembrane segment spans residues 12-32 (LLVIILLSLACSIIVAGSAVL). At T226 the chain carries FMN phosphoryl threonine.

Belongs to the NqrC family. In terms of assembly, composed of six subunits; NqrA, NqrB, NqrC, NqrD, NqrE and NqrF. FMN serves as cofactor.

The protein resides in the cell inner membrane. The catalysed reaction is a ubiquinone + n Na(+)(in) + NADH + H(+) = a ubiquinol + n Na(+)(out) + NAD(+). Functionally, NQR complex catalyzes the reduction of ubiquinone-1 to ubiquinol by two successive reactions, coupled with the transport of Na(+) ions from the cytoplasm to the periplasm. NqrA to NqrE are probably involved in the second step, the conversion of ubisemiquinone to ubiquinol. This chain is Na(+)-translocating NADH-quinone reductase subunit C, found in Pasteurella multocida (strain Pm70).